The chain runs to 587 residues: Pyruvate kinase (587 aa).

Arg-33 is a substrate binding site. Residues Asn-35, Ser-37, Asp-67, and Thr-68 each coordinate K(+). ATP is bound at residue 35 to 38; it reads NFSH. ATP-binding residues include Arg-74 and Lys-157. Residue Lys-221 coordinates substrate. Position 223 (Glu-223) interacts with Mg(2+). Gly-246, Asp-247, and Thr-279 together coordinate substrate. Asp-247 is a binding site for Mg(2+).

Belongs to the pyruvate kinase family. The protein in the C-terminal section; belongs to the PEP-utilizing enzyme family. In terms of assembly, homotetramer. It depends on Mg(2+) as a cofactor. The cofactor is K(+). In terms of processing, the N-terminus is blocked.

It carries out the reaction pyruvate + ATP = phosphoenolpyruvate + ADP + H(+). Its pathway is carbohydrate degradation; glycolysis; pyruvate from D-glyceraldehyde 3-phosphate: step 5/5. Its activity is regulated as follows. Exhibits homotropic positive cooperativity for PEP. Allosterically activated by ribose-5-phosphate, AMP and other nucleoside monophosphates but not by fructose-1,6-bisphosphate. In terms of biological role, catalyzes the phosphoryl transfer from phosphoenolpyruvate (PEP) to ADP to form pyruvate and ATP. Has a broad specificity for nucleoside diphosphates and can use ADP, GDP, IDP and UDP. This is Pyruvate kinase (pyk) from Geobacillus stearothermophilus (Bacillus stearothermophilus).